The sequence spans 603 residues: Sulfite reductase [NADPH] flavoprotein alpha-component (603 aa).

The region spanning 64–202 (ITLISASQTG…QAETWRAAIV (139 aa)) is the Flavodoxin-like domain. FMN-binding positions include 70–75 (SQTGNA), 117–120 (STQG), and 153–162 (LGDSSYEHFA). One can recognise an FAD-binding FR-type domain in the interval 236–452 (EAPLTAHLAL…IEHNDNFRLP (217 aa)). FAD is bound by residues Thr-326, Leu-360, 390 to 393 (RLYS), 408 to 410 (TVG), Tyr-414, and 423 to 426 (GGAS). NADP(+)-binding positions include 523–524 (SR), 529–533 (KIYVQ), and Asp-565. Residue Tyr-603 coordinates FAD.

Belongs to the NADPH-dependent sulphite reductase flavoprotein subunit CysJ family. The protein in the N-terminal section; belongs to the flavodoxin family. This sequence in the C-terminal section; belongs to the flavoprotein pyridine nucleotide cytochrome reductase family. As to quaternary structure, alpha(8)-beta(8). The alpha component is a flavoprotein, the beta component is a hemoprotein. Requires FAD as cofactor. FMN is required as a cofactor.

The catalysed reaction is hydrogen sulfide + 3 NADP(+) + 3 H2O = sulfite + 3 NADPH + 4 H(+). It participates in sulfur metabolism; hydrogen sulfide biosynthesis; hydrogen sulfide from sulfite (NADPH route): step 1/1. Component of the sulfite reductase complex that catalyzes the 6-electron reduction of sulfite to sulfide. This is one of several activities required for the biosynthesis of L-cysteine from sulfate. The flavoprotein component catalyzes the electron flow from NADPH -&gt; FAD -&gt; FMN to the hemoprotein component. The sequence is that of Sulfite reductase [NADPH] flavoprotein alpha-component from Sodalis glossinidius (strain morsitans).